The primary structure comprises 244 residues: Biosynthetic peptidoglycan transglycosylase (244 aa).

The helical transmembrane segment at 25-45 (LLLLLAIALLYQSWFLLHIIY) threads the bilayer.

The protein belongs to the glycosyltransferase 51 family.

It localises to the cell inner membrane. It carries out the reaction [GlcNAc-(1-&gt;4)-Mur2Ac(oyl-L-Ala-gamma-D-Glu-L-Lys-D-Ala-D-Ala)](n)-di-trans,octa-cis-undecaprenyl diphosphate + beta-D-GlcNAc-(1-&gt;4)-Mur2Ac(oyl-L-Ala-gamma-D-Glu-L-Lys-D-Ala-D-Ala)-di-trans,octa-cis-undecaprenyl diphosphate = [GlcNAc-(1-&gt;4)-Mur2Ac(oyl-L-Ala-gamma-D-Glu-L-Lys-D-Ala-D-Ala)](n+1)-di-trans,octa-cis-undecaprenyl diphosphate + di-trans,octa-cis-undecaprenyl diphosphate + H(+). It functions in the pathway cell wall biogenesis; peptidoglycan biosynthesis. Peptidoglycan polymerase that catalyzes glycan chain elongation from lipid-linked precursors. The protein is Biosynthetic peptidoglycan transglycosylase of Nitrosomonas eutropha (strain DSM 101675 / C91 / Nm57).